Here is a 345-residue protein sequence, read N- to C-terminus: Phosphoribosylformylglycinamidine cyclo-ligase (345 aa).

This sequence belongs to the AIR synthase family.

It localises to the cytoplasm. It catalyses the reaction 2-formamido-N(1)-(5-O-phospho-beta-D-ribosyl)acetamidine + ATP = 5-amino-1-(5-phospho-beta-D-ribosyl)imidazole + ADP + phosphate + H(+). The protein operates within purine metabolism; IMP biosynthesis via de novo pathway; 5-amino-1-(5-phospho-D-ribosyl)imidazole from N(2)-formyl-N(1)-(5-phospho-D-ribosyl)glycinamide: step 2/2. This is Phosphoribosylformylglycinamidine cyclo-ligase from Sodalis glossinidius (strain morsitans).